The following is a 247-amino-acid chain: Neurotrophic factor BDNF precursor form (247 aa).

Positions 1–18 (MTILFLTMVISYFGCMKA) are cleaved as a signal peptide. The propeptide occupies 19–128 (APMKEANVRG…AANMSMRVRR (110 aa)). Asn121 carries N-linked (GlcNAc...) asparagine glycosylation. 3 cysteine pairs are disulfide-bonded: Cys141/Cys208, Cys186/Cys237, and Cys196/Cys239.

The protein belongs to the NGF-beta family. As to quaternary structure, monomers and homodimers. Binds to NTRK2/TRKB. Can form heterodimers with other neurotrophin family members, such as NTF3 and NTF4 (in vitro), but the physiological relevance of this is not clear. BDNF precursor form: interacts with the heterodimer formed by NGFR and SORCS2. Mature BDNF has much lower affinity for the heterodimer formed by NGFR and SORCS2. N-glycosylated and glycosulfated, contrary to mature BDNF. In terms of processing, mature BDNF is produced by proteolytic removal of the propeptide, catalyzed by a FURIN family member. In addition, the precursor form is proteolytically cleaved within the propeptide, but this is not an obligatory intermediate for the production of mature BDNF. Can be converted into mature BDNF by plasmin (PLG).

It is found in the secreted. Its function is as follows. Important signaling molecule that activates signaling cascades downstream of NTRK2. During development, promotes the survival and differentiation of selected neuronal populations of the peripheral and central nervous systems. Participates in axonal growth, pathfinding and in the modulation of dendritic growth and morphology. Major regulator of synaptic transmission and plasticity at adult synapses in many regions of the CNS. The versatility of BDNF is emphasized by its contribution to a range of adaptive neuronal responses including long-term potentiation (LTP), long-term depression (LTD), certain forms of short-term synaptic plasticity, as well as homeostatic regulation of intrinsic neuronal excitability. Important signaling molecule that activates signaling cascades downstream of NTRK2. Activates signaling cascades via the heterodimeric receptor formed by NGFR and SORCS2. Signaling via NGFR and SORCS2 plays a role in synaptic plasticity and long-term depression (LTD). Binding to NGFR and SORCS2 promotes neuronal apoptosis. Promotes neuronal growth cone collapse. This is Neurotrophic factor BDNF precursor form (BDNF) from Ailuropoda melanoleuca (Giant panda).